Here is a 346-residue protein sequence, read N- to C-terminus: N-acetyl-gamma-glutamyl-phosphate reductase (346 aa).

Residue Cys150 is part of the active site.

It belongs to the NAGSA dehydrogenase family. Type 1 subfamily.

It is found in the cytoplasm. The enzyme catalyses N-acetyl-L-glutamate 5-semialdehyde + phosphate + NADP(+) = N-acetyl-L-glutamyl 5-phosphate + NADPH + H(+). It functions in the pathway amino-acid biosynthesis; L-arginine biosynthesis; N(2)-acetyl-L-ornithine from L-glutamate: step 3/4. Functionally, catalyzes the NADPH-dependent reduction of N-acetyl-5-glutamyl phosphate to yield N-acetyl-L-glutamate 5-semialdehyde. The protein is N-acetyl-gamma-glutamyl-phosphate reductase of Lachnoclostridium phytofermentans (strain ATCC 700394 / DSM 18823 / ISDg) (Clostridium phytofermentans).